Consider the following 235-residue polypeptide: Endonuclease V (235 aa).

Mg(2+) contacts are provided by Asp-47 and Asp-115.

It belongs to the endonuclease V family. It depends on Mg(2+) as a cofactor.

It localises to the cytoplasm. The enzyme catalyses Endonucleolytic cleavage at apurinic or apyrimidinic sites to products with a 5'-phosphate.. Its function is as follows. DNA repair enzyme involved in the repair of deaminated bases. Selectively cleaves double-stranded DNA at the second phosphodiester bond 3' to a deoxyinosine leaving behind the intact lesion on the nicked DNA. This Myxococcus xanthus (strain DK1622) protein is Endonuclease V.